The primary structure comprises 301 residues: Ornithine carbamoyltransferase (301 aa).

Carbamoyl phosphate-binding positions include 47-50, glutamine 74, arginine 98, and 125-128; these read STRT and HPCQ. Residues asparagine 156, aspartate 220, and 224 to 225 each bind L-ornithine; that span reads SM. Carbamoyl phosphate contacts are provided by residues 260–261 and arginine 288; that span reads CL.

It belongs to the aspartate/ornithine carbamoyltransferase superfamily. OTCase family.

Its subcellular location is the cytoplasm. The enzyme catalyses carbamoyl phosphate + L-ornithine = L-citrulline + phosphate + H(+). Its pathway is amino-acid biosynthesis; L-arginine biosynthesis; L-arginine from L-ornithine and carbamoyl phosphate: step 1/3. Functionally, reversibly catalyzes the transfer of the carbamoyl group from carbamoyl phosphate (CP) to the N(epsilon) atom of ornithine (ORN) to produce L-citrulline. The sequence is that of Ornithine carbamoyltransferase from Methanobrevibacter smithii (strain ATCC 35061 / DSM 861 / OCM 144 / PS).